Consider the following 320-residue polypeptide: MILCLSFLLMIGFSLIAEGFSFIIPKGYLYAAIGFSVMIEALNQLAQFNRRRFLSANMTLRQRTTEAVMNLLSGQKEKAELDADTASLVADQDQHPLFNPQERLMIERVLNLNQRSVSSIMTSRHDIERINLSAPEEEIRSLVEKNQHTRLVVTGGKDNEDLLGVVHVIDLLQQSLRQEPLDLQALVRQPLVFPEGLPLLSALEQFRQARTHFAFVVDEFGSVEGIVTLSDVMETIAGNLPNEVEEIDARHDIQHHQDGSWTVNGHMPLEDLVQYVPLPLDDKREYHTVAGLLMEYLQHVPQWGRPLRLTVIPCARCRST.

Residues 4–24 form a helical membrane-spanning segment; it reads CLSFLLMIGFSLIAEGFSFII. CBS domains lie at 121–183 and 186–244; these read MTSR…PLDL and LVRQ…PNEV.

It belongs to the UPF0053 family.

Its subcellular location is the cell membrane. The sequence is that of UPF0053 protein in cps region from Klebsiella pneumoniae.